Reading from the N-terminus, the 401-residue chain is S-adenosylmethionine synthase (401 aa).

His15 is an ATP binding site. Residue Asp17 coordinates Mg(2+). K(+) is bound at residue Glu43. L-methionine-binding residues include Glu56 and Gln99. The interval 99 to 109 (QSPEIGAGVDT) is flexible loop. Residues 101–132 (PEIGAGVDTSHEVRGSSSTDEDDRQGAGDQGL) are disordered. Residues 174-176 (DGK), Asp254, 260-261 (RK), Ala277, and Lys281 contribute to the ATP site. Residue Asp254 participates in L-methionine binding. Lys285 is a binding site for L-methionine.

Belongs to the AdoMet synthase family. As to quaternary structure, homotetramer; dimer of dimers. Mg(2+) serves as cofactor. The cofactor is K(+).

It localises to the cytoplasm. It catalyses the reaction L-methionine + ATP + H2O = S-adenosyl-L-methionine + phosphate + diphosphate. The protein operates within amino-acid biosynthesis; S-adenosyl-L-methionine biosynthesis; S-adenosyl-L-methionine from L-methionine: step 1/1. Functionally, catalyzes the formation of S-adenosylmethionine (AdoMet) from methionine and ATP. The overall synthetic reaction is composed of two sequential steps, AdoMet formation and the subsequent tripolyphosphate hydrolysis which occurs prior to release of AdoMet from the enzyme. This Corynebacterium urealyticum (strain ATCC 43042 / DSM 7109) protein is S-adenosylmethionine synthase.